A 162-amino-acid polypeptide reads, in one-letter code: EF-hand calcium-binding domain-containing protein 11 (162 aa).

EF-hand domains are found at residues 18–53 (SERR…LFGY), 91–126 (LYRN…VAPK), and 127–162 (LPAR…GQSK). Ca(2+) contacts are provided by Asp140, Asp142, Asp144, His146, and Asp151.

This is EF-hand calcium-binding domain-containing protein 11 (Efcab11) from Mus musculus (Mouse).